A 160-amino-acid polypeptide reads, in one-letter code: Ribosomal RNA large subunit methyltransferase H (160 aa).

Residues leucine 77, glycine 109, and 128–133 (FSRMTF) contribute to the S-adenosyl-L-methionine site.

This sequence belongs to the RNA methyltransferase RlmH family. As to quaternary structure, homodimer.

The protein resides in the cytoplasm. The enzyme catalyses pseudouridine(1915) in 23S rRNA + S-adenosyl-L-methionine = N(3)-methylpseudouridine(1915) in 23S rRNA + S-adenosyl-L-homocysteine + H(+). In terms of biological role, specifically methylates the pseudouridine at position 1915 (m3Psi1915) in 23S rRNA. The polypeptide is Ribosomal RNA large subunit methyltransferase H (Pelotomaculum thermopropionicum (strain DSM 13744 / JCM 10971 / SI)).